We begin with the raw amino-acid sequence, 705 residues long: Ribosomal RNA large subunit methyltransferase K/L (705 aa).

The region spanning 43–154 (VVYRCCLWSR…GEKGILGFDL (112 aa)) is the THUMP domain.

It belongs to the methyltransferase superfamily. RlmKL family.

The protein resides in the cytoplasm. The enzyme catalyses guanosine(2445) in 23S rRNA + S-adenosyl-L-methionine = N(2)-methylguanosine(2445) in 23S rRNA + S-adenosyl-L-homocysteine + H(+). It carries out the reaction guanosine(2069) in 23S rRNA + S-adenosyl-L-methionine = N(2)-methylguanosine(2069) in 23S rRNA + S-adenosyl-L-homocysteine + H(+). In terms of biological role, specifically methylates the guanine in position 2445 (m2G2445) and the guanine in position 2069 (m7G2069) of 23S rRNA. In Aliivibrio salmonicida (strain LFI1238) (Vibrio salmonicida (strain LFI1238)), this protein is Ribosomal RNA large subunit methyltransferase K/L.